Here is a 371-residue protein sequence, read N- to C-terminus: Cytochrome b (371 aa).

Helical transmembrane passes span 25-45, 69-90, 105-125, and 170-190; these read FGSM…SLSM, WVMQ…YMYI, WLSG…GYVL, and FFAL…IHIM. Heme b is bound at residue His-75. His-174 and His-188 together coordinate heme b. His-193 provides a ligand contact to a ubiquinone. 4 helical membrane-spanning segments follow: residues 218 to 238, 280 to 300, 312 to 332, and 339 to 358; these read YKDI…VSFF, LGGA…PFTH, LMQF…WTAT, and FTTI…MSNP.

Belongs to the cytochrome b family. In terms of assembly, the cytochrome bc1 complex contains 3 respiratory subunits (MT-CYB, CYC1 and UQCRFS1), 2 core proteins (UQCRC1 and UQCRC2) and probably 6 low-molecular weight proteins. Requires heme b as cofactor.

The protein resides in the mitochondrion inner membrane. Functionally, component of the ubiquinol-cytochrome c reductase complex (complex III or cytochrome b-c1 complex) that is part of the mitochondrial respiratory chain. The b-c1 complex mediates electron transfer from ubiquinol to cytochrome c. Contributes to the generation of a proton gradient across the mitochondrial membrane that is then used for ATP synthesis. In Candoia aspera (New Guinea boa), this protein is Cytochrome b (MT-CYB).